Reading from the N-terminus, the 390-residue chain is Putative glutamate--cysteine ligase 2 (390 aa).

This sequence belongs to the glutamate--cysteine ligase type 2 family. YbdK subfamily.

The enzyme catalyses L-cysteine + L-glutamate + ATP = gamma-L-glutamyl-L-cysteine + ADP + phosphate + H(+). In terms of biological role, ATP-dependent carboxylate-amine ligase which exhibits weak glutamate--cysteine ligase activity. This Chloroflexus aggregans (strain MD-66 / DSM 9485) protein is Putative glutamate--cysteine ligase 2.